Here is a 353-residue protein sequence, read N- to C-terminus: Glutamine synthetase cytosolic isozyme 1-5 (353 aa).

Thr2 carries the post-translational modification N-acetylthreonine. Ser3 carries the post-translational modification Phosphoserine. The GS beta-grasp domain maps to 19 to 99; the sequence is IIAEYIWIGG…VMCDAYRPAG (81 aa). Positions 106–353 constitute a GS catalytic domain; sequence NRHKAVKIFD…TSMIAETTIL (248 aa).

It belongs to the glutamine synthetase family. Homooctamer. In terms of tissue distribution, not expressed in roots.

It is found in the cytoplasm. It carries out the reaction L-glutamate + NH4(+) + ATP = L-glutamine + ADP + phosphate + H(+). The polypeptide is Glutamine synthetase cytosolic isozyme 1-5 (GLN1-5) (Arabidopsis thaliana (Mouse-ear cress)).